The chain runs to 403 residues: 1-deoxy-D-xylulose 5-phosphate reductoisomerase (403 aa).

6 residues coordinate NADPH: Thr-18, Gly-19, Ser-20, Ile-21, Gln-46, and Asn-132. A 1-deoxy-D-xylulose 5-phosphate-binding site is contributed by Lys-133. Residue Glu-134 participates in NADPH binding. Asp-158 serves as a coordination point for Mn(2+). 4 residues coordinate 1-deoxy-D-xylulose 5-phosphate: Ser-159, Glu-160, Ser-189, and His-212. Residue Glu-160 coordinates Mn(2+). Gly-218 lines the NADPH pocket. 1-deoxy-D-xylulose 5-phosphate-binding residues include Ser-225, Asn-230, Lys-231, and Glu-234. Glu-234 contributes to the Mn(2+) binding site.

Belongs to the DXR family. The cofactor is Mg(2+). Mn(2+) serves as cofactor.

It carries out the reaction 2-C-methyl-D-erythritol 4-phosphate + NADP(+) = 1-deoxy-D-xylulose 5-phosphate + NADPH + H(+). The protein operates within isoprenoid biosynthesis; isopentenyl diphosphate biosynthesis via DXP pathway; isopentenyl diphosphate from 1-deoxy-D-xylulose 5-phosphate: step 1/6. Catalyzes the NADPH-dependent rearrangement and reduction of 1-deoxy-D-xylulose-5-phosphate (DXP) to 2-C-methyl-D-erythritol 4-phosphate (MEP). The polypeptide is 1-deoxy-D-xylulose 5-phosphate reductoisomerase (Aromatoleum aromaticum (strain DSM 19018 / LMG 30748 / EbN1) (Azoarcus sp. (strain EbN1))).